Here is an 83-residue protein sequence, read N- to C-terminus: U-actitoxin-Aeq6b (83 aa).

An N-terminal signal peptide occupies residues 1–20; sequence MIYKAVFVCLVLVLLGDVFC. Positions 21 to 36 are excised as a propeptide; the sequence is SPRNSGGGTLNDNPFE. At Pro82 the chain carries Proline amide.

In terms of processing, contains 3 disulfide bonds. As to expression, expressed by acrorhagi.

The protein resides in the secreted. The protein localises to the nematocyst. Its function is as follows. Toxin. This Actinia equina (Beadlet anemone) protein is U-actitoxin-Aeq6b.